We begin with the raw amino-acid sequence, 237 residues long: MVLQYPQNKILVLSDHPHNFSKTQFLQDLFHCSSTGISIVKDQTWENRYYKVHFDLYIDSCKDIPVWVEEFITPECEPLRNVMAGIILITDIRQTKPQELLHQFMIAAHRNTFVVLVNVNEEVEQDEIDELNEIWSNAFTNVIELVNWKRSKPTVNHNDYGEKLGLDRIQEIIDTHDWLNCEVLPATKIREEIPNEMPLEQIIRNLQSARLKYKSIENSSEADAFANEMADELSRYL.

The protein belongs to the IRC6 family.

Its function is as follows. Involved in gross chromosomal rearrangements (GCRs) and telomere healing. This Saccharomyces cerevisiae (strain AWRI1631) (Baker's yeast) protein is Increased recombination centers protein 6 (IRC6).